Reading from the N-terminus, the 386-residue chain is Phosphoglycerate kinase (386 aa).

Substrate-binding positions include 21–23 (DLN), arginine 36, 59–62 (HLGR), arginine 112, and arginine 145. ATP is bound by residues lysine 196, glutamate 313, and 339–342 (GGDT).

Belongs to the phosphoglycerate kinase family. Monomer.

The protein resides in the cytoplasm. It carries out the reaction (2R)-3-phosphoglycerate + ATP = (2R)-3-phospho-glyceroyl phosphate + ADP. The protein operates within carbohydrate degradation; glycolysis; pyruvate from D-glyceraldehyde 3-phosphate: step 2/5. This is Phosphoglycerate kinase from Haemophilus influenzae (strain PittGG).